Consider the following 229-residue polypeptide: Large ribosomal subunit protein uL1 (229 aa).

Belongs to the universal ribosomal protein uL1 family. Part of the 50S ribosomal subunit.

In terms of biological role, binds directly to 23S rRNA. The L1 stalk is quite mobile in the ribosome, and is involved in E site tRNA release. Protein L1 is also a translational repressor protein, it controls the translation of the L11 operon by binding to its mRNA. The chain is Large ribosomal subunit protein uL1 from Clostridium botulinum (strain ATCC 19397 / Type A).